The chain runs to 90 residues: Phosphocarrier protein NPr (90 aa).

One can recognise an HPr domain in the interval 2–90; sequence TVKQTVEISN…ALFNAGFDED (89 aa). Residue H16 is the Pros-phosphohistidine intermediate of the active site.

It belongs to the HPr family.

Its subcellular location is the cytoplasm. In terms of biological role, component of the phosphoenolpyruvate-dependent nitrogen-metabolic phosphotransferase system (nitrogen-metabolic PTS), that seems to be involved in regulating nitrogen metabolism. The phosphoryl group from phosphoenolpyruvate (PEP) is transferred to the phosphoryl carrier protein NPr by enzyme I-Ntr. Phospho-NPr then transfers it to EIIA-Ntr. Could function in the transcriptional regulation of sigma-54 dependent operons in conjunction with the NPr (PtsO) and EIIA-Ntr (PtsN) proteins. This Klebsiella oxytoca protein is Phosphocarrier protein NPr (ptsO).